The primary structure comprises 132 residues: Putative RNase AF_2433 (132 aa).

Residues arginine 90 and histidine 95 contribute to the active site. The short motif at 90-97 is the RX(4)HXY motif element; sequence RNWLVHRY. An O-di-AMP-tyrosine modification is found at tyrosine 97.

This sequence belongs to the HepT RNase toxin family. As to quaternary structure, homodimer, probably forms a complex with cognate antitoxin AF_2432. Modified by cognate antitoxin AF_2432; probably at least 2 successive AMPylation events occur on Tyr-97.

Its function is as follows. Probable toxic component of a putative type VII toxin-antitoxin (TA) system, probably an RNase. Probably neutralized by cognate antitoxin AF_2432. Neutralization may be due to AMPylation by AF_2432. In Archaeoglobus fulgidus (strain ATCC 49558 / DSM 4304 / JCM 9628 / NBRC 100126 / VC-16), this protein is Putative RNase AF_2433.